The chain runs to 89 residues: Small ribosomal subunit protein uS15 (89 aa).

Belongs to the universal ribosomal protein uS15 family. In terms of assembly, part of the 30S ribosomal subunit. Forms a bridge to the 50S subunit in the 70S ribosome, contacting the 23S rRNA.

In terms of biological role, one of the primary rRNA binding proteins, it binds directly to 16S rRNA where it helps nucleate assembly of the platform of the 30S subunit by binding and bridging several RNA helices of the 16S rRNA. Its function is as follows. Forms an intersubunit bridge (bridge B4) with the 23S rRNA of the 50S subunit in the ribosome. This Thermus thermophilus (strain ATCC BAA-163 / DSM 7039 / HB27) protein is Small ribosomal subunit protein uS15.